We begin with the raw amino-acid sequence, 397 residues long: Protein Rep52 (397 aa).

The SF3 helicase domain maps to 84-239 (DPQYAASVFL…LDHDFGKVTK (156 aa)). Position 110-117 (110-117 (GPATTGKT)) interacts with ATP. Positions 265–296 (GGAKKRPAPSDADISEPKRVRESVAQPSTSDA) are disordered.

Homooligomer. Interacts with host PRKX.

Its subcellular location is the host nucleus. Functionally, plays a critical role during packaging of viral DNA into empty capsids, where they are thought to be part of the packaging motor complex. The single stranded genomic DNA is packaged in a 3' to 5' direction and requires the association between viral DNA and Rep40. Regulates host PKA activity by interacting with host PRKX as a mechanism to interfere with helper virus propagation and to promote its own replication. This Mammalia (AAV-2) protein is Protein Rep52 (Rep52).